Consider the following 353-residue polypeptide: uncharacterized protein (353 aa).

7 residues coordinate Zn(2+): C40, H70, C100, C103, C106, C114, and C158.

Belongs to the zinc-containing alcohol dehydrogenase family. Requires Zn(2+) as cofactor.

This is an uncharacterized protein from Escherichia coli (strain K12).